The chain runs to 209 residues: Potassium-transporting ATPase KdpC subunit (209 aa).

Residues 18-38 (MLAVFTLFGLGLAYSLVATGI) traverse the membrane as a helical segment.

Belongs to the KdpC family. In terms of assembly, the system is composed of three essential subunits: KdpA, KdpB and KdpC.

The protein localises to the cell inner membrane. In terms of biological role, part of the high-affinity ATP-driven potassium transport (or Kdp) system, which catalyzes the hydrolysis of ATP coupled with the electrogenic transport of potassium into the cytoplasm. This subunit acts as a catalytic chaperone that increases the ATP-binding affinity of the ATP-hydrolyzing subunit KdpB by the formation of a transient KdpB/KdpC/ATP ternary complex. In Xanthomonas oryzae pv. oryzae (strain MAFF 311018), this protein is Potassium-transporting ATPase KdpC subunit.